A 1676-amino-acid polypeptide reads, in one-letter code: DNA-directed RNA polymerase subunit beta'-beta'' (1676 aa).

Positions 1–582 (MCDAIQIRLA…FLKTTPGRII (582 aa)) are DNA-directed RNA polymerase subunit beta'. 4 residues coordinate Zn(2+): Cys-64, Cys-66, Cys-79, and Cys-82. Residues Asp-454, Asp-456, and Asp-458 each contribute to the Mg(2+) site. A DNA-directed RNA polymerase subunit beta'' region spans residues 583 to 1676 (FYQQAAYHVG…IPAGTGAKYL (1094 aa)). 4 residues coordinate Zn(2+): Cys-804, Cys-859, Cys-866, and Cys-869.

The protein in the N-terminal section; belongs to the RNA polymerase beta' chain family. RpoC1 subfamily. It in the C-terminal section; belongs to the RNA polymerase beta' chain family. RpoC2 subfamily. As to quaternary structure, in plastids the minimal PEP RNA polymerase catalytic core is composed of four subunits: alpha, beta, beta', and beta''. When a (nuclear-encoded) sigma factor is associated with the core the holoenzyme is formed, which can initiate transcription. Beta' and beta'' are fused in this algae. Mg(2+) serves as cofactor. Requires Zn(2+) as cofactor.

It localises to the plastid. It is found in the chloroplast. It catalyses the reaction RNA(n) + a ribonucleoside 5'-triphosphate = RNA(n+1) + diphosphate. In terms of biological role, DNA-dependent RNA polymerase catalyzes the transcription of DNA into RNA using the four ribonucleoside triphosphates as substrates. The polypeptide is DNA-directed RNA polymerase subunit beta'-beta'' (Cyanidioschyzon merolae (strain NIES-3377 / 10D) (Unicellular red alga)).